Reading from the N-terminus, the 469-residue chain is D-3-phosphoglycerate dehydrogenase 2 (469 aa).

Residue S2 is modified to N-acetylserine. Phosphoserine occurs at positions 22, 29, and 33. NAD(+) contacts are provided by residues 208–209 (HI), D228, 285–287 (ASR), and D311. Residue R287 is part of the active site. The active site involves E316. H347 serves as the catalytic Proton donor. 347 to 350 (HIGG) serves as a coordination point for NAD(+). An ACT domain is found at 399-469 (RVLYIHRNVP…SAKVSIRLLY (71 aa)).

Belongs to the D-isomer specific 2-hydroxyacid dehydrogenase family.

It carries out the reaction (2R)-3-phosphoglycerate + NAD(+) = 3-phosphooxypyruvate + NADH + H(+). The catalysed reaction is (R)-2-hydroxyglutarate + NAD(+) = 2-oxoglutarate + NADH + H(+). Its pathway is amino-acid biosynthesis; L-serine biosynthesis; L-serine from 3-phospho-D-glycerate: step 1/3. Functionally, catalyzes the reversible oxidation of 3-phospho-D-glycerate to 3-phosphonooxypyruvate, the first step of the phosphorylated L-serine biosynthesis pathway. Also catalyzes the reversible oxidation of 2-hydroxyglutarate to 2-oxoglutarate. The polypeptide is D-3-phosphoglycerate dehydrogenase 2 (SER33) (Saccharomyces cerevisiae (strain ATCC 204508 / S288c) (Baker's yeast)).